A 916-amino-acid chain; its full sequence is DNA ligase 1 (916 aa).

Positions 1–10 (MQRSIMSFFQ) are enriched in polar residues. Residues 1 to 197 (MQRSIMSFFQ…SPESVTLTKT (197 aa)) form a disordered region. Residues 13–43 (KEGKAKKPEKETPSSIREKEPPPKVALKERN) show a composition bias toward basic and acidic residues. Ser49, Ser51, and Ser65 each carry phosphoserine. A Phosphothreonine modification is found at Thr77. A compositionally biased stretch (polar residues) spans 99 to 111 (PENSPVFNCSSPM). Positions 119 to 129 (PKRRTARKQLP) are enriched in basic residues. The residue at position 144 (Lys144) is an N6-acetyllysine. Over residues 153–177 (KEEETPKESLAEAEDIKQKEEKEGD) the composition is skewed to basic and acidic residues. A compositionally biased stretch (polar residues) spans 185-197 (PTKSPESVTLTKT). Residue Thr193 is modified to Phosphothreonine. Lys225 carries the N6-acetyllysine modification. Ser228 and Ser229 each carry phosphoserine. Position 232 is a phosphothreonine (Thr232). The tract at residues 236 to 266 (PAVKTEVKQEESGTLRKEETKGTLDPANYNP) is disordered. The segment covering 238–257 (VKTEVKQEESGTLRKEETKG) has biased composition (basic and acidic residues). Residues 447-456 (RLRLGLAEQS) are interaction with target DNA. Glu564 contacts ATP. The N6-AMP-lysine intermediate role is filled by Lys566. Arg571 and Glu619 together coordinate ATP. Residue Glu619 participates in Mg(2+) binding. The segment at 640-642 (KRK) is interaction with target DNA. Glu718 contacts Mg(2+). Residues Lys723 and Lys742 each coordinate ATP. Thr796 is modified (phosphothreonine). Ser799, Ser906, Ser907, and Ser911 each carry phosphoserine. Residues 879–916 (DKQPEQATTSNQVASLYRKQSQIQNQQSSDLDSDVEDY) form a disordered region. The span at 883–908 (EQATTSNQVASLYRKQSQIQNQQSSD) shows a compositional bias: polar residues.

This sequence belongs to the ATP-dependent DNA ligase family. As to quaternary structure, interacts with PCNA. Interacts with POLB. Mg(2+) serves as cofactor.

Its subcellular location is the nucleus. The enzyme catalyses ATP + (deoxyribonucleotide)n-3'-hydroxyl + 5'-phospho-(deoxyribonucleotide)m = (deoxyribonucleotide)n+m + AMP + diphosphate.. DNA ligase that seals nicks in double-stranded during DNA repair. Also involved in DNA replication and DNA recombination. The polypeptide is DNA ligase 1 (Lig1) (Mus musculus (Mouse)).